A 446-amino-acid polypeptide reads, in one-letter code: Endoplasmic reticulum membrane adapter protein XK (446 aa).

At M1–K2 the chain is on the cytoplasmic side. A helical membrane pass occupies residues F3 to Y23. Topologically, residues L24–Q37 are extracellular. The chain crosses the membrane as a helical span at residues V38–V58. Residues H59–L68 are Cytoplasmic-facing. Residues A69–I89 traverse the membrane as a helical segment. At Y90–S140 the chain is on the extracellular side. A Phosphoserine modification is found at S115. The chain crosses the membrane as a helical span at residues V141–L161. Residues E162–F171 lie on the Cytoplasmic side of the membrane. Residues I172 to I192 traverse the membrane as a helical segment. Residues K193–Y208 lie on the Extracellular side of the membrane. A helical membrane pass occupies residues V209–F229. Residues T230–I235 lie on the Cytoplasmic side of the membrane. A helical transmembrane segment spans residues W236–F256. Residues W257–T277 lie on the Extracellular side of the membrane. Residues I278–V298 traverse the membrane as a helical segment. Residues Q299–L317 are Cytoplasmic-facing. Residues L318–F338 form a helical membrane-spanning segment. Residues K339 to P349 lie on the Extracellular side of the membrane. A helical membrane pass occupies residues L350 to Y370. Topologically, residues Q371–A446 are cytoplasmic.

This sequence belongs to the XK family. In terms of assembly, heterodimer with Kell; disulfide-linked. Interacts with VPS13A.

It is found in the endoplasmic reticulum membrane. Its function is as follows. Recruits the lipid transfer protein VPS13A from lipid droplets to the endoplasmic reticulum (ER) membrane. This chain is Endoplasmic reticulum membrane adapter protein XK, found in Mus musculus (Mouse).